The primary structure comprises 116 residues: Large ribosomal subunit protein bL19 (116 aa).

This sequence belongs to the bacterial ribosomal protein bL19 family.

This protein is located at the 30S-50S ribosomal subunit interface and may play a role in the structure and function of the aminoacyl-tRNA binding site. The protein is Large ribosomal subunit protein bL19 of Pasteurella multocida (strain Pm70).